A 245-amino-acid polypeptide reads, in one-letter code: 8-amino-3,8-dideoxy-manno-octulosonate cytidylyltransferase (245 aa).

It belongs to the KdsB family.

The protein localises to the cytoplasm. It carries out the reaction 8-amino-3,8-dideoxy-alpha-D-manno-octulosonate + CTP = CMP-8-amino-3,8-dideoxy-alpha-D-manno-oct-2-ulosonate + diphosphate. The protein operates within bacterial outer membrane biogenesis; lipopolysaccharide biosynthesis. Activates KDO8N (a required 8-carbon sugar) for incorporation into bacterial lipopolysaccharide in the Shewanella genus. This chain is 8-amino-3,8-dideoxy-manno-octulosonate cytidylyltransferase, found in Shewanella woodyi (strain ATCC 51908 / MS32).